A 367-amino-acid chain; its full sequence is uncharacterized protein (367 aa).

The protein belongs to the mimivirus L17x/L18x family.

This is an uncharacterized protein from Acanthamoeba polyphaga (Amoeba).